Consider the following 175-residue polypeptide: Bacterial proteasome activator (175 aa).

A disordered region spans residues 152–175; that stretch reads LPPGIQVPGAQRGGATHPGTGQYL. Residues 173–175 carry the HbYX motif motif; the sequence is QYL.

Belongs to the Bpa family. As to quaternary structure, forms a homooligomeric, either hexameric or heptameric, ring-like structure which stacks co-axially with the proteasomal alpha-rings.

Functionally, interacts with the core proteasome alpha-subunit (PrcA) through its C-terminal hydrophobic-tyrosine-X motif (HbYX motif). Interaction of Bpa with the proteasome stimulates proteasomal peptidase and casein degradation activity, which suggests Bpa could play a role in the removal of non-native or damaged proteins by influencing the conformation of the proteasome complex upon interaction. The polypeptide is Bacterial proteasome activator (Mycolicibacterium smegmatis (strain ATCC 700084 / mc(2)155) (Mycobacterium smegmatis)).